Here is a 329-residue protein sequence, read N- to C-terminus: Malate dehydrogenase (329 aa).

An NAD(+)-binding site is contributed by 12 to 18; that stretch reads GAAGQIG. Substrate is bound by residues Arg93 and Arg99. NAD(+) is bound by residues Asn106, Gln113, and 130–132; that span reads VGN. Positions 132 and 163 each coordinate substrate. The active-site Proton acceptor is the His188.

It belongs to the LDH/MDH superfamily. MDH type 2 family.

It catalyses the reaction (S)-malate + NAD(+) = oxaloacetate + NADH + H(+). Functionally, catalyzes the reversible oxidation of malate to oxaloacetate. The chain is Malate dehydrogenase from Frankia casuarinae (strain DSM 45818 / CECT 9043 / HFP020203 / CcI3).